A 544-amino-acid chain; its full sequence is MAKRIIYNENARRALEKGIDILAESVAVTLGPKGRNVVLEKKFGAPQIINDGVTIAKEIELEDHIENTGVALIRQAASKTNDAAGDGTTTATVLAHAMVKAGLRNVAAGANAITLKKGIDKASDFLVAEIKDKANPISDSNAIAQVGTISAGNDEEVGRMIADAMDKVGKEGVISLEEGKSMTTELEVTEGMRFDKGYISPYFATDTERMEAVLDEPYILLTDKKIGLVQDLVPVLEQIARTGKPLLIIAEDIEKEALATLVVNRLRGVLNVAAVKAPGFGDRRKAMLEDMAVLTNGQLITEDAGLKLENAKIEMLGTARRVTINKDTTTIVAEGNEVAVQARCEQIKKQMDETESTYDKEKLQERLAKLAGGVAVVKVGAATETEMKDKKLRLEDAINATKAAVEEGIVPGGGTTLAHLAPALEQWAASTLSGEELIGANIVAAALTAPLMRIAENAGVNGAVVAENVKAKSFNEGYNAANGDYVDMLAAGIVDPAKVTRSGLQNAASIAGMVLTTECIVADLPEKKEAAPAGGGMGGGDFDY.

ATP is bound by residues 29–32 (TLGP), 86–90 (DGTTT), G413, 479–481 (NAA), and D495.

The protein belongs to the chaperonin (HSP60) family. In terms of assembly, forms a cylinder of 14 subunits composed of two heptameric rings stacked back-to-back. Interacts with the co-chaperonin GroES.

It localises to the cytoplasm. The catalysed reaction is ATP + H2O + a folded polypeptide = ADP + phosphate + an unfolded polypeptide.. In terms of biological role, together with its co-chaperonin GroES, plays an essential role in assisting protein folding. The GroEL-GroES system forms a nano-cage that allows encapsulation of the non-native substrate proteins and provides a physical environment optimized to promote and accelerate protein folding. The sequence is that of Chaperonin GroEL 2 from Synechococcus sp. (strain WH7803).